A 161-amino-acid chain; its full sequence is Regulator of ribonuclease activity A (161 aa).

It belongs to the RraA family. Homotrimer. Binds to both RNA-binding sites in the C-terminal region of Rne and to RhlB.

The protein resides in the cytoplasm. Functionally, globally modulates RNA abundance by binding to RNase E (Rne) and regulating its endonucleolytic activity. Can modulate Rne action in a substrate-dependent manner by altering the composition of the degradosome. Modulates RNA-binding and helicase activities of the degradosome. The polypeptide is Regulator of ribonuclease activity A (Serratia proteamaculans (strain 568)).